Reading from the N-terminus, the 209-residue chain is Large ribosomal subunit protein bL25 (209 aa).

The disordered stretch occupies residues 190–209 (PDASAAPVAAPAAPAKKGKK).

The protein belongs to the bacterial ribosomal protein bL25 family. CTC subfamily. In terms of assembly, part of the 50S ribosomal subunit; part of the 5S rRNA/L5/L18/L25 subcomplex. Contacts the 5S rRNA. Binds to the 5S rRNA independently of L5 and L18.

Its function is as follows. This is one of the proteins that binds to the 5S RNA in the ribosome where it forms part of the central protuberance. In Delftia acidovorans (strain DSM 14801 / SPH-1), this protein is Large ribosomal subunit protein bL25.